Here is a 210-residue protein sequence, read N- to C-terminus: ATP-dependent Clp protease proteolytic subunit (210 aa).

The active-site Nucleophile is the Ser107. His132 is a catalytic residue.

Belongs to the peptidase S14 family. In terms of assembly, fourteen ClpP subunits assemble into 2 heptameric rings which stack back to back to give a disk-like structure with a central cavity, resembling the structure of eukaryotic proteasomes.

The protein localises to the cytoplasm. The enzyme catalyses Hydrolysis of proteins to small peptides in the presence of ATP and magnesium. alpha-casein is the usual test substrate. In the absence of ATP, only oligopeptides shorter than five residues are hydrolyzed (such as succinyl-Leu-Tyr-|-NHMec, and Leu-Tyr-Leu-|-Tyr-Trp, in which cleavage of the -Tyr-|-Leu- and -Tyr-|-Trp bonds also occurs).. Its function is as follows. Cleaves peptides in various proteins in a process that requires ATP hydrolysis. Has a chymotrypsin-like activity. Plays a major role in the degradation of misfolded proteins. The protein is ATP-dependent Clp protease proteolytic subunit of Zymomonas mobilis subsp. mobilis (strain ATCC 31821 / ZM4 / CP4).